Consider the following 269-residue polypeptide: UPF0739 protein C1orf74 (269 aa).

The protein belongs to the UPF0739 family.

The chain is UPF0739 protein C1orf74 (C1orf74) from Homo sapiens (Human).